Here is an 89-residue protein sequence, read N- to C-terminus: MALTAKTKQELIEEFKTHDSDTGSPEVQVALLTNRITYLTEHFKTHKKDHHSRRGLLKLVGQRRRLLNYLKNKDVQRYRTLIEALGLRK.

It belongs to the universal ribosomal protein uS15 family. Part of the 30S ribosomal subunit. Forms a bridge to the 50S subunit in the 70S ribosome, contacting the 23S rRNA.

Functionally, one of the primary rRNA binding proteins, it binds directly to 16S rRNA where it helps nucleate assembly of the platform of the 30S subunit by binding and bridging several RNA helices of the 16S rRNA. Its function is as follows. Forms an intersubunit bridge (bridge B4) with the 23S rRNA of the 50S subunit in the ribosome. This is Small ribosomal subunit protein uS15 from Desulfatibacillum aliphaticivorans.